Consider the following 790-residue polypeptide: LPS-assembly protein LptD (790 aa).

An N-terminal signal peptide occupies residues 1–20 (MRMLRWLILSAFSVAGAVQA).

This sequence belongs to the LptD family. As to quaternary structure, component of the lipopolysaccharide transport and assembly complex. Interacts with LptE and LptA.

Its subcellular location is the cell outer membrane. In terms of biological role, together with LptE, is involved in the assembly of lipopolysaccharide (LPS) at the surface of the outer membrane. In Bordetella bronchiseptica (strain ATCC BAA-588 / NCTC 13252 / RB50) (Alcaligenes bronchisepticus), this protein is LPS-assembly protein LptD.